A 920-amino-acid polypeptide reads, in one-letter code: B3 domain-containing protein REM17 (920 aa).

3 consecutive DNA-binding regions (TF-B3) follow at residues 12 to 105, 153 to 250, and 267 to 361; these read NPHF…LGPS, RFVA…CRAK, and CFEG…LCPT. Disordered stretches follow at residues 405 to 438, 540 to 562, and 585 to 614; these read DDDQTNIGNSSRKKRVSKNPREKVESSSDHSSFV, LACSEGNKSEESEEEGTEDKNTS, and DDDQTNIGNSSKEKRVKKNPVKKAESSSDH. Residues 423–432 show a composition bias toward basic and acidic residues; it reads NPREKVESSS. The segment at residues 436–531 is a DNA-binding region (TF-B3 4); that stretch reads SFVGSVNPSS…NKPVLSLCPT (96 aa). 2 consecutive DNA-binding regions (TF-B3) follow at residues 616–714 and 727–823; these read SFVA…SLSE and YFVG…LCPA. Over residues 842–852 the composition is skewed to low complexity; the sequence is NSLSSNPSSGD. Residues 842–870 are disordered; sequence NSLSSNPSSGDDSSRSEESEEENMEDKNI.

The protein resides in the nucleus. This is B3 domain-containing protein REM17 (REM17) from Arabidopsis thaliana (Mouse-ear cress).